Here is a 131-residue protein sequence, read N- to C-terminus: Hypocretin neuropeptide precursor (131 aa).

Positions 1–33 are cleaved as a signal peptide; sequence MNLPSTKVSWAAVTLLLLLLLLPPALLSSGAAA. Position 34 is a pyrrolidone carboxylic acid (Q34). 2 cysteine pairs are disulfide-bonded: C39/C45 and C40/C47. L66 carries the post-translational modification Leucine amide. M97 bears the Methionine amide mark. A propeptide spans 98-131 (removed in mature form); the sequence is GRRAGAEPAPRPCLGRRCSAPAAASVAPGGQSGI.

The protein belongs to the orexin family. Specific enzymatic cleavages at paired basic residues yield the different active peptides. In terms of tissue distribution, abundantly expressed in subthalamic nucleus but undetectable in other brain regions tested (hypothalamus was not tested) and in heart, placenta, lung, liver, skeletal muscle, kidney and pancreas.

It localises to the rough endoplasmic reticulum. The protein localises to the cytoplasmic vesicle. It is found in the synapse. Its function is as follows. Neuropeptides that play a significant role in the regulation of food intake and sleep-wakefulness, possibly by coordinating the complex behavioral and physiologic responses of these complementary homeostatic functions. A broader role in the homeostatic regulation of energy metabolism, autonomic function, hormonal balance and the regulation of body fluids, is also suggested. In terms of biological role, binds to orexin receptors HCRTR1/OX1R and HCRTR2/OX2R with a high affinity. Stimulates food intake. Modulates pituitary luteinizing hormone secretion in an ovarian steroid-dependent manner. Functionally, binds to orexin receptor HCRTR2/OX2R only. Stimulates food intake. Modulates pituitary luteinizing hormone secretion in an ovarian steroid-dependent manner. This chain is Hypocretin neuropeptide precursor, found in Homo sapiens (Human).